The sequence spans 458 residues: SLIT-ROBO Rho GTPase-activating protein 2B (458 aa).

The 303-residue stretch at 22-324 folds into the F-BAR domain; the sequence is KEIRAQLTEQ…AVENLDATSD (303 aa). Residues 181–203 are compositionally biased toward basic and acidic residues; that stretch reads LKEAEKQEEKQIGKSVKQEDRQT. The tract at residues 181–214 is disordered; it reads LKEAEKQEEKQIGKSVKQEDRQTPRSPDSTANVR. The stretch at 362–400 forms a coiled coil; it reads QSELLQRCQQLQSRLSTLKIENEEVKKTMEATLQTIQDI.

May interact with SRGAP2; formation of the heterodimer alters SRGAP2 function.

May regulate cell migration and differentiation through interaction with and inhibition of SRGAP2. In contrast to SRGAP2C, it is not able to induce long-lasting changes in synaptic density throughout adulthood. The polypeptide is SLIT-ROBO Rho GTPase-activating protein 2B (SRGAP2B) (Homo sapiens (Human)).